The following is a 292-amino-acid chain: Diaminopimelate epimerase (292 aa).

Substrate contacts are provided by Asn13, Gln46, and Asn66. The Proton donor role is filled by Cys75. Substrate contacts are provided by residues 76–77 (GN), Asn166, Asn199, and 217–218 (ER). The Proton acceptor role is filled by Cys226. Residue 227-228 (GT) participates in substrate binding.

Belongs to the diaminopimelate epimerase family. In terms of assembly, homodimer.

The protein localises to the cytoplasm. The catalysed reaction is (2S,6S)-2,6-diaminopimelate = meso-2,6-diaminopimelate. It functions in the pathway amino-acid biosynthesis; L-lysine biosynthesis via DAP pathway; DL-2,6-diaminopimelate from LL-2,6-diaminopimelate: step 1/1. In terms of biological role, catalyzes the stereoinversion of LL-2,6-diaminopimelate (L,L-DAP) to meso-diaminopimelate (meso-DAP), a precursor of L-lysine and an essential component of the bacterial peptidoglycan. The sequence is that of Diaminopimelate epimerase from Ralstonia nicotianae (strain ATCC BAA-1114 / GMI1000) (Ralstonia solanacearum).